We begin with the raw amino-acid sequence, 379 residues long: Protein trichome birefringence-like 36 (379 aa).

Residues 8-24 (VLFLSLCLILGKVVLSQ) form a helical; Signal-anchor for type II membrane protein membrane-spanning segment. Residues 123–125 (GDS) carry the GDS motif motif. The DCXHWCLPGXXDXWN motif motif lies at 353–367 (DCSHWCLPGVPDIWN).

The protein belongs to the PC-esterase family. TBL subfamily.

The protein localises to the membrane. Its function is as follows. May act as a bridging protein that binds pectin and other cell wall polysaccharides. Probably involved in maintaining esterification of pectins. May be involved in the specific O-acetylation of cell wall polymers. The chain is Protein trichome birefringence-like 36 (TBL36) from Arabidopsis thaliana (Mouse-ear cress).